Reading from the N-terminus, the 87-residue chain is uncharacterized protein (87 aa).

A helical membrane pass occupies residues 63-83; sequence IVLALVLGVFSLVGLIFIIYF.

It is found in the membrane. This is an uncharacterized protein from Dictyostelium discoideum (Social amoeba).